Reading from the N-terminus, the 147-residue chain is Male-specific protein scotti (147 aa).

The segment at proline 55–serine 93 is disordered. Residues tyrosine 82 to serine 93 show a composition bias toward polar residues. The N-linked (GlcNAc...) asparagine glycan is linked to asparagine 128.

It belongs to the male-specific scotti family. Expressed in primary spermatocytes and round spermatids. Low expression is seen in very short elongating cysts, but were detected at high levels in a few longer spermatid cysts.

Functionally, post-meiotically transcribed gene that has a role in late spermiogenesis; required for actin cone progression during spermatid individualization. This chain is Male-specific protein scotti, found in Drosophila melanogaster (Fruit fly).